A 235-amino-acid polypeptide reads, in one-letter code: ATP-dependent dethiobiotin synthetase BioD (235 aa).

ATP is bound at residue 12–17; that stretch reads GVGKTF. Threonine 16 provides a ligand contact to Mg(2+). The active site involves lysine 37. Serine 41 is a binding site for substrate. ATP-binding positions include aspartate 51, 112–115, and 202–204; these read EGAG and PKL. Residues aspartate 51 and glutamate 112 each coordinate Mg(2+).

It belongs to the dethiobiotin synthetase family. In terms of assembly, homodimer. Mg(2+) is required as a cofactor.

It localises to the cytoplasm. The enzyme catalyses (7R,8S)-7,8-diammoniononanoate + CO2 + ATP = (4R,5S)-dethiobiotin + ADP + phosphate + 3 H(+). The protein operates within cofactor biosynthesis; biotin biosynthesis; biotin from 7,8-diaminononanoate: step 1/2. In terms of biological role, catalyzes a mechanistically unusual reaction, the ATP-dependent insertion of CO2 between the N7 and N8 nitrogen atoms of 7,8-diaminopelargonic acid (DAPA, also called 7,8-diammoniononanoate) to form a ureido ring. The polypeptide is ATP-dependent dethiobiotin synthetase BioD (Bacillus licheniformis (strain ATCC 14580 / DSM 13 / JCM 2505 / CCUG 7422 / NBRC 12200 / NCIMB 9375 / NCTC 10341 / NRRL NRS-1264 / Gibson 46)).